We begin with the raw amino-acid sequence, 359 residues long: MSDEGSRGSRLPLALPPASQGCSSGGGGGGSSAGGSGNSRPPRNLQGLLQMAITAGSEEPDPPPEPMSEERRQWLQEAMSAAFRGQREEVEQMKSCLRVLSQPMPPTAGEAEQAADQQEREGALELLADLCENMDNAADFCQLSGMHLLVGRYLEAGAAGLRWRAAQLIGTCSQNVAAIQEQVLGLGALRKLLRLLDRDACDTVRVKALFAISCLVREQEAGLLQFLRLDGFSVLMRAMQQQVQKLKVKSAFLLQNLLVGHPEHKGTLCSMGMVQQLVALVRTEHSPFHEHVLGALCSLVTDFPQGVRECREPELGLEELLRHRCQLLQQHEEYQEELEFCEKLLQTCFSSPADDSMDR.

Residues Met1–Arg71 form a disordered region. The span at Ser23 to Gly37 shows a compositional bias: gly residues. ARM repeat units follow at residues Glu132 to Gln174, Ala177 to Arg217, Glu220 to Val259, and Pro262 to Thr301. Phosphoserine occurs at positions 351 and 356.

As to quaternary structure, interacts with the ATP-binding domain of HSPA1A. Detected in a ternary complex containing STUB1, HSPA1A and HSPBP1. Interacts with PGLYRP1; this interaction blocks the cytotoxic activity of the PGLYRP1-HSPA1A complex. Ubiquitous.

In terms of biological role, inhibits HSPA1A chaperone activity by changing the conformation of the ATP-binding domain of HSPA1A and interfering with ATP binding. Interferes with ubiquitination mediated by STUB1 and inhibits chaperone-assisted degradation of immature CFTR. This chain is Hsp70-binding protein 1, found in Homo sapiens (Human).